We begin with the raw amino-acid sequence, 530 residues long: UDP-glucuronosyltransferase 1A8 (530 aa).

The signal sequence occupies residues 1-25; the sequence is MAPSGCPPSLPLCVCLFLASGFAQA. Residues Asn71, Asn292, and Asn430 are each glycosylated (N-linked (GlcNAc...) asparagine). A helical transmembrane segment spans residues 488-504; the sequence is VIGFLLAIVLTVVFIVY.

It belongs to the UDP-glycosyltransferase family. As to quaternary structure, homodimers. Homooligomer. Interacts with UGT1A1, UGT1A3, UGT1A4, UGT1A6, UGT1A7, UGT1A8, UGT1A9 and UGT1A10 to form heterodimers.

The protein resides in the endoplasmic reticulum membrane. The enzyme catalyses glucuronate acceptor + UDP-alpha-D-glucuronate = acceptor beta-D-glucuronoside + UDP + H(+). It catalyses the reaction 17beta-estradiol + UDP-alpha-D-glucuronate = 17beta-estradiol 3-O-(beta-D-glucuronate) + UDP + H(+). It carries out the reaction 17alpha-estradiol + UDP-alpha-D-glucuronate = 17alpha-estradiol 3-O-(beta-D-glucuronate) + UDP + H(+). The catalysed reaction is estrone + UDP-alpha-D-glucuronate = estrone 3-O-(beta-D-glucuronate) + UDP + H(+). The enzyme catalyses 16alpha,17alpha-estriol + UDP-alpha-D-glucuronate = 16alpha,17alpha-estriol 3-O-(beta-D-glucuronate) + UDP + H(+). It catalyses the reaction 2-hydroxy-17beta-estradiol + UDP-alpha-D-glucuronate = 2-hydroxy-17beta-estradiol 3-O-(beta-D-glucuronate) + UDP + H(+). It carries out the reaction 2-hydroxy-17beta-estradiol + UDP-alpha-D-glucuronate = 17beta-estradiol 2-O-(beta-D-glucuronate) + UDP + H(+). The catalysed reaction is 2-hydroxyestrone + UDP-alpha-D-glucuronate = 2-hydroxyestrone 3-O-(beta-D-glucuronate) + UDP + H(+). The enzyme catalyses 4-hydroxy-17beta-estradiol + UDP-alpha-D-glucuronate = 4-hydroxy-17beta-estradiol 3-O-(beta-D-glucuronate) + UDP + H(+). It catalyses the reaction 4-hydroxy-17beta-estradiol + UDP-alpha-D-glucuronate = 17beta-estradiol 4-O-(beta-D-glucuronate) + UDP + H(+). It carries out the reaction 4-hydroxyestrone + UDP-alpha-D-glucuronate = 4-hydroxyestrone 3-O-(beta-D-glucuronate) + UDP + H(+). The catalysed reaction is 4-hydroxyestrone + UDP-alpha-D-glucuronate = estrone 4-O-(beta-D-glucuronate) + UDP + H(+). The enzyme catalyses 2-methoxy-17beta-estradiol + UDP-alpha-D-glucuronate = 2-methoxy-17beta-estradiol 3-O-(beta-D-glucuronate) + UDP + H(+). It catalyses the reaction 2-methoxyestrone + UDP-alpha-D-glucuronate = 2-methoxyestrone 3-O-(beta-D-glucuronate) + UDP + H(+). It carries out the reaction 4-methoxy-17beta-estradiol + UDP-alpha-D-glucuronate = 4-methoxy-17beta-estradiol 3-O-(beta-D-glucuronate) + UDP + H(+). The catalysed reaction is 4-methoxyestrone + UDP-alpha-D-glucuronate = 4-methoxyestrone 3-O-(beta-D-glucuronate) + UDP + H(+). The enzyme catalyses 17beta-hydroxy-5alpha-androstan-3-one + UDP-alpha-D-glucuronate = 5alpha-dihydrotestosterone 17-O-(beta-D-glucuronate) + UDP + H(+). It catalyses the reaction 5alpha-dihydrotestosterone 17-O-(beta-D-glucuronate) + UDP-alpha-D-glucuronate = 5alpha-dihydrotestosterone 17-O-[beta-D-glucuronosyl-(1-&gt;2)-glucuronate] + UDP + H(+). It carries out the reaction prunetin + UDP-alpha-D-glucuronate = prunetin-4'-O-beta-D-glucuronide + UDP. The catalysed reaction is prunetin + UDP-alpha-D-glucuronate = prunetin-5-O-beta-D-glucuronide + UDP. The enzyme catalyses (E)-ferulate + UDP-alpha-D-glucuronate = (E)-4-O-(beta-D-glucuronosyl)-ferulate + UDP + H(+). It catalyses the reaction (E)-ferulate + UDP-alpha-D-glucuronate = (E)-ferulic acid beta-D-glucuronate ester + UDP. It carries out the reaction candesartan + UDP-alpha-D-glucuronate = candesartan O-beta-D-glucuronoside + UDP. The catalysed reaction is mycophenolate + UDP-alpha-D-glucuronate = mycophenolate 7-O-beta-D-glucuronide + UDP + H(+). Functionally, UDP-glucuronosyltransferase (UGT) that catalyzes phase II biotransformation reactions in which lipophilic substrates are conjugated with glucuronic acid to increase the metabolite's water solubility, thereby facilitating excretion into either the urine or bile. Essential for the elimination and detoxification of drugs, xenobiotics and endogenous compounds. Catalyzes the glucuronidation of endogenous steroid hormones such as androgens and estrogens. Produces dihydrotestosterone (DHT) diglucuronide from the DHT after two subsequent glucoronidation steps. Involved in the glucuronidation of the phytochemical ferulic acid at the phenolic or the carboxylic acid group. Also catalyzes the glucuronidation of the isoflavones genistein, daidzein, glycitein, formononetin, biochanin A and prunetin, which are phytoestrogens with anticancer and cardiovascular properties. Involved in the glucuronidation of the AGTR1 angiotensin receptor antagonist caderastan, a drug which can inhibit the effect of angiotensin II. Also metabolizes mycophenolate, an immunosuppressive agent. This Rattus norvegicus (Rat) protein is UDP-glucuronosyltransferase 1A8.